Consider the following 82-residue polypeptide: uncharacterized protein (82 aa).

Positions 60 to 82 (YKRRRPDHMMKRNSPSYTGDHKT) are disordered.

This is an uncharacterized protein from Saccharomyces cerevisiae (strain ATCC 204508 / S288c) (Baker's yeast).